A 332-amino-acid chain; its full sequence is dTDP-3,4-didehydro-2,6-dideoxy-alpha-D-glucose 3-reductase (332 aa).

Residue Cys17 to Arg23 coordinates NADP(+). Position 24 (Arg24) interacts with substrate. Residues Ser42–Arg43, Tyr63, Leu79, and His84 contribute to the NADP(+) site. The active-site Proton donor is the Lys102. NADP(+)-binding residues include Arg170 and Asp182. Tyr240 and Thr260 together coordinate substrate.

The protein belongs to the Gfo/Idh/MocA family. Homotetramer; dimer of dimers.

The catalysed reaction is dTDP-4-dehydro-2,6-dideoxy-alpha-D-glucose + NADP(+) = dTDP-3,4-didehydro-2,6-dideoxy-alpha-D-glucose + NADPH + H(+). Its pathway is antibiotic biosynthesis. Its function is as follows. Involved in the biosynthesis of L-digitoxose, an unusual dideoxysugar attached to various pharmacologically active natural products, including the antitumor antibiotic tetrocarcin A, and the antibiotics kijanimicin and jadomycin B. Catalyzes the reduction of the C-3 keto moiety of dTDP-3,4-diketo-2,6-dideoxy-alpha-D-glucose to yield dTDP-4-keto-2,6-dideoxy-alpha-D-glucose. Also able to reduce dTDP-3-keto-6-deoxy-D-galactose and dTDP-3-keto-6-deoxy-D-glucose to yield dTDP-fucose and dTDP-quinovose, respectively. This is dTDP-3,4-didehydro-2,6-dideoxy-alpha-D-glucose 3-reductase from Actinomadura kijaniata.